Reading from the N-terminus, the 68-residue chain is MITYKKLLDELKKEIGPIAKIFLNKAMESLGYDDVDDSNYKEILSVLKMNKELREYVEIVEERLEKEG.

This is an uncharacterized protein from Archaeoglobus fulgidus (strain ATCC 49558 / DSM 4304 / JCM 9628 / NBRC 100126 / VC-16).